The sequence spans 192 residues: Peptidyl-tRNA hydrolase (192 aa).

A tRNA-binding site is contributed by Y14. Residue H19 is the Proton acceptor of the active site. Residues Y64, N66, and N112 each coordinate tRNA.

This sequence belongs to the PTH family. Monomer.

It is found in the cytoplasm. It catalyses the reaction an N-acyl-L-alpha-aminoacyl-tRNA + H2O = an N-acyl-L-amino acid + a tRNA + H(+). Hydrolyzes ribosome-free peptidyl-tRNAs (with 1 or more amino acids incorporated), which drop off the ribosome during protein synthesis, or as a result of ribosome stalling. In terms of biological role, catalyzes the release of premature peptidyl moieties from peptidyl-tRNA molecules trapped in stalled 50S ribosomal subunits, and thus maintains levels of free tRNAs and 50S ribosomes. This chain is Peptidyl-tRNA hydrolase, found in Prosthecochloris aestuarii (strain DSM 271 / SK 413).